A 127-amino-acid polypeptide reads, in one-letter code: Glycine cleavage system H protein (127 aa).

Positions E22–E104 constitute a Lipoyl-binding domain. An N6-lipoyllysine modification is found at K63.

This sequence belongs to the GcvH family. The glycine cleavage system is composed of four proteins: P, T, L and H. (R)-lipoate is required as a cofactor.

The glycine cleavage system catalyzes the degradation of glycine. The H protein shuttles the methylamine group of glycine from the P protein to the T protein. In terms of biological role, is also involved in protein lipoylation via its role as an octanoyl/lipoyl carrier protein intermediate. The chain is Glycine cleavage system H protein from Bacillus cereus (strain B4264).